Here is an 86-residue protein sequence, read N- to C-terminus: Large ribosomal subunit protein bL31B (86 aa).

The protein belongs to the bacterial ribosomal protein bL31 family. Type B subfamily. Part of the 50S ribosomal subunit.

The protein is Large ribosomal subunit protein bL31B of Burkholderia cenocepacia (strain ATCC BAA-245 / DSM 16553 / LMG 16656 / NCTC 13227 / J2315 / CF5610) (Burkholderia cepacia (strain J2315)).